Consider the following 380-residue polypeptide: 4-hydroxy-3-methylbut-2-en-1-yl diphosphate synthase (flavodoxin) (380 aa).

[4Fe-4S] cluster is bound by residues Cys275, Cys278, Cys310, and Glu317.

Belongs to the IspG family. Requires [4Fe-4S] cluster as cofactor.

It catalyses the reaction (2E)-4-hydroxy-3-methylbut-2-enyl diphosphate + oxidized [flavodoxin] + H2O + 2 H(+) = 2-C-methyl-D-erythritol 2,4-cyclic diphosphate + reduced [flavodoxin]. It participates in isoprenoid biosynthesis; isopentenyl diphosphate biosynthesis via DXP pathway; isopentenyl diphosphate from 1-deoxy-D-xylulose 5-phosphate: step 5/6. Its function is as follows. Converts 2C-methyl-D-erythritol 2,4-cyclodiphosphate (ME-2,4cPP) into 1-hydroxy-2-methyl-2-(E)-butenyl 4-diphosphate. This Hyphomonas neptunium (strain ATCC 15444) protein is 4-hydroxy-3-methylbut-2-en-1-yl diphosphate synthase (flavodoxin).